A 444-amino-acid chain; its full sequence is Glutamyl-tRNA reductase (444 aa).

Residues 41–44, Ser-102, 107–109, and Gln-113 contribute to the substrate site; these read TCNR and ERE. Cys-42 (nucleophile) is an active-site residue. Position 181-186 (181-186) interacts with NADP(+); it reads GTGSYA.

It belongs to the glutamyl-tRNA reductase family. Homodimer.

It catalyses the reaction (S)-4-amino-5-oxopentanoate + tRNA(Glu) + NADP(+) = L-glutamyl-tRNA(Glu) + NADPH + H(+). The protein operates within porphyrin-containing compound metabolism; protoporphyrin-IX biosynthesis; 5-aminolevulinate from L-glutamyl-tRNA(Glu): step 1/2. Its function is as follows. Catalyzes the NADPH-dependent reduction of glutamyl-tRNA(Glu) to glutamate 1-semialdehyde (GSA). The polypeptide is Glutamyl-tRNA reductase (Cutibacterium acnes (strain DSM 16379 / KPA171202) (Propionibacterium acnes)).